Here is a 180-residue protein sequence, read N- to C-terminus: MVEFEIVKGDITRFPAEAIVNAANRYLEHGGGVAYAIAKAAAGDPREYIRISKEAMREQLGKDHIEHGEVVVTPAMRLEKHGIRYVIHTVGPYCGGIWDEDKKEKLRKAILGALRKAEELGVKTIAFPAVSAGIYGCPLEEVVKTFKEVIDEFEREAGSVERVYLVLYSEKDYERALRAV.

Residues 1 to 180 (MVEFEIVKGD…KDYERALRAV (180 aa)) form the Macro domain.

This is an uncharacterized protein from Thermococcus kodakarensis (strain ATCC BAA-918 / JCM 12380 / KOD1) (Pyrococcus kodakaraensis (strain KOD1)).